Consider the following 451-residue polypeptide: tRNA modification GTPase MnmE (451 aa).

Positions 28, 85, and 124 each coordinate (6S)-5-formyl-5,6,7,8-tetrahydrofolate. The TrmE-type G domain maps to 220–373; that stretch reads GLYTVLVGPP…LKTRLRTLLL (154 aa). Asn-230 serves as a coordination point for K(+). GTP contacts are provided by residues 230–235, 249–255, and 274–277; these read NVGKSS, TDVPGTT, and DTAG. Ser-234 contacts Mg(2+). K(+) contacts are provided by Thr-249, Val-251, and Thr-254. Position 255 (Thr-255) interacts with Mg(2+). Lys-451 lines the (6S)-5-formyl-5,6,7,8-tetrahydrofolate pocket.

It belongs to the TRAFAC class TrmE-Era-EngA-EngB-Septin-like GTPase superfamily. TrmE GTPase family. As to quaternary structure, homodimer. Heterotetramer of two MnmE and two MnmG subunits. Requires K(+) as cofactor.

Its subcellular location is the cytoplasm. Exhibits a very high intrinsic GTPase hydrolysis rate. Involved in the addition of a carboxymethylaminomethyl (cmnm) group at the wobble position (U34) of certain tRNAs, forming tRNA-cmnm(5)s(2)U34. This Xylella fastidiosa (strain 9a5c) protein is tRNA modification GTPase MnmE.